The primary structure comprises 445 residues: Phosphoglucosamine mutase 1 (445 aa).

Ser102 acts as the Phosphoserine intermediate in catalysis. Ser102, Asp241, Asp243, and Asp245 together coordinate Mg(2+). Residue Ser102 is modified to Phosphoserine.

This sequence belongs to the phosphohexose mutase family. Requires Mg(2+) as cofactor. Activated by phosphorylation.

The enzyme catalyses alpha-D-glucosamine 1-phosphate = D-glucosamine 6-phosphate. Its function is as follows. Catalyzes the conversion of glucosamine-6-phosphate to glucosamine-1-phosphate. The polypeptide is Phosphoglucosamine mutase 1 (Shewanella sp. (strain MR-4)).